Here is a 180-residue protein sequence, read N- to C-terminus: Epididymal-specific lipocalin-6 (180 aa).

The first 20 residues, 1–20 (MGGLLLAALLALVAVPRAQA), serve as a signal peptide directing secretion. A disulfide bridge links Cys81 with Cys174.

The protein belongs to the calycin superfamily. Lipocalin family.

The protein resides in the secreted. Functionally, may play a role in male fertility. The chain is Epididymal-specific lipocalin-6 (LCN6) from Macaca mulatta (Rhesus macaque).